We begin with the raw amino-acid sequence, 166 residues long: Transcriptional repressor NrdR (166 aa).

Residues 3 to 34 fold into a zinc finger; sequence CPFCGFSDSRVLDSRPTVEGNSIRRRRECCGC. Positions 49–139 constitute an ATP-cone domain; it reads LIVVKKDGRR…VYREFRDAES (91 aa).

This sequence belongs to the NrdR family. Requires Zn(2+) as cofactor.

Its function is as follows. Negatively regulates transcription of bacterial ribonucleotide reductase nrd genes and operons by binding to NrdR-boxes. In Pelotomaculum thermopropionicum (strain DSM 13744 / JCM 10971 / SI), this protein is Transcriptional repressor NrdR.